Here is a 447-residue protein sequence, read N- to C-terminus: Chromosomal replication initiator protein DnaA (447 aa).

Residues 1 to 66 (MSNRIISILK…SKAIKEAYGK (66 aa)) are domain I, interacts with DnaA modulators. The tract at residues 66-102 (KNLDYEIVYETTEPEAFNKSNESYKGPLVKKKPLLIS) is domain II. The domain III, AAA+ region stretch occupies residues 103-319 (NLNANYTFEN…GVIIKLIVQS (217 aa)). ATP is bound by residues G146, G148, K149, and T150. A domain IV, binds dsDNA region spans residues 320–447 (SINKERIGAA…NTMATSSAAG (128 aa)).

Belongs to the DnaA family. As to quaternary structure, oligomerizes as a right-handed, spiral filament on DNA at oriC.

The protein resides in the cytoplasm. Functionally, plays an essential role in the initiation and regulation of chromosomal replication. ATP-DnaA binds to the origin of replication (oriC) to initiate formation of the DNA replication initiation complex once per cell cycle. Binds the DnaA box (a 9 base pair repeat at the origin) and separates the double-stranded (ds)DNA. Forms a right-handed helical filament on oriC DNA; dsDNA binds to the exterior of the filament while single-stranded (ss)DNA is stabiized in the filament's interior. The ATP-DnaA-oriC complex binds and stabilizes one strand of the AT-rich DNA unwinding element (DUE), permitting loading of DNA polymerase. After initiation quickly degrades to an ADP-DnaA complex that is not apt for DNA replication. Binds acidic phospholipids. The sequence is that of Chromosomal replication initiator protein DnaA from Kosmotoga olearia (strain ATCC BAA-1733 / DSM 21960 / TBF 19.5.1).